A 556-amino-acid polypeptide reads, in one-letter code: MKTDIEIAQSIELKPIVDVVEKLGISYDDLELYGKYKAKLSFDKIRAVESNPVGKLILVTAINPTPAGEGKSTLTIGLADALNKIGKKTMIAIREPSLGPVMGIKGGAAGGGYAQVLPMEDINLHFTGDMHAITTANNALSALIDNHLHQGNELGIDQRRILWKRVVDLNDRALRHVTVGLGGPLNGIPREDGFDITVASEIMAILCLATDIEDLKRRLANIVIGYRYDRTPVSVGDLQVEGALALILKDAIKPNLVQTIYGTPAFVHGGPFANIAHGCNSVLATTTALHLADYTVTEAGFGADLGAEKFLDIKTPNLPTSPDAVVIVATLRALKMNGGVAKDALTEENVEAVRAGFANLKRHVENIRKFGIPAVVAINEFVSDTEAEIAVLKELCASIDVPVELASVWADGAEGGVALAETVVKTIAENPANYKRLYDNDLSVQEKIEKIVTEIYRGSKVNFEKKAQTQIAQIVQNGWDKLPICMAKTQYSFSDNPNALGAPENFEITIRELVPKLGAGFIVALTGDVMTMPGLPKRPAALNMDVESDGTVLGLF.

65-72 (TPAGEGKS) contacts ATP.

This sequence belongs to the formate--tetrahydrofolate ligase family.

The enzyme catalyses (6S)-5,6,7,8-tetrahydrofolate + formate + ATP = (6R)-10-formyltetrahydrofolate + ADP + phosphate. The protein operates within one-carbon metabolism; tetrahydrofolate interconversion. The chain is Formate--tetrahydrofolate ligase from Streptococcus pneumoniae (strain 70585).